A 272-amino-acid chain; its full sequence is Putative pyruvate, phosphate dikinase regulatory protein (272 aa).

Residue 151–158 participates in ADP binding; it reads GISRTSKT.

This sequence belongs to the pyruvate, phosphate/water dikinase regulatory protein family. PDRP subfamily.

It catalyses the reaction N(tele)-phospho-L-histidyl/L-threonyl-[pyruvate, phosphate dikinase] + ADP = N(tele)-phospho-L-histidyl/O-phospho-L-threonyl-[pyruvate, phosphate dikinase] + AMP + H(+). The enzyme catalyses N(tele)-phospho-L-histidyl/O-phospho-L-threonyl-[pyruvate, phosphate dikinase] + phosphate + H(+) = N(tele)-phospho-L-histidyl/L-threonyl-[pyruvate, phosphate dikinase] + diphosphate. Functionally, bifunctional serine/threonine kinase and phosphorylase involved in the regulation of the pyruvate, phosphate dikinase (PPDK) by catalyzing its phosphorylation/dephosphorylation. This is Putative pyruvate, phosphate dikinase regulatory protein from Staphylococcus aureus (strain Mu3 / ATCC 700698).